The chain runs to 495 residues: Cytochrome P450 monooxygenase FrzC (495 aa).

Residues 8-28 (GLVVGLWVTYHILLGTYNVFF) form a helical membrane-spanning segment. Residue C437 coordinates heme.

It belongs to the cytochrome P450 family. The cofactor is heme.

The protein localises to the membrane. It catalyses the reaction (S,S)-2,5-di-(p-hydroxybenzyl)piperazine + reduced [NADPH--hemoprotein reductase] + O2 = (1S,4S)-4-[(4-hydroxyphenyl)methyl]-2,5-diazaspiro[bicyclo[3.2.1]octane-6,1'-cyclohexane]-2',5'-dien-4'-one + oxidized [NADPH--hemoprotein reductase] + 2 H2O + H(+). Its pathway is secondary metabolite biosynthesis. Cytochrome P450 monooxygenase; part of the gene cluster that mediates the biosynthesis of the alkaloid (-)-FR901483, a potent immunosuppressant that shows efficacy in animal models and a probable inhibitor of purine nucleotide biosynthesis by targeting phosphoribosylpyrophosphate amidotransferase (PPAT). Within the pathway, FrzC catalyzes the coupling between N10 and C1' to produce a 1,4-diazabicyclo[3.2.1]octane spiro-fused to a 2,5-cyclohexadienone. FrzC probably first catalyzes homolysis of the N-H bond to generate the N10 radical which is followed by an O-H abstraction to give the phenolic radical which can be delocalized to C1'. Radical coupling between N10 and C1' then forms. The biosynthesis of (-)-FR901483 starts with the condensation of two L-tyrosines to yield (S,S)-dityrosyl-piperazine. This process occurs in 3 steps with the non-canonical nonribosomal peptide synthetase FrzA catalyzing the reduction of L-tyrosine into L-tyrosinal, the spontaneous condensation of 2 L-tyrosinal units, and the subsequent reduction by the NmrA-like family domain-containing oxidoreductase FrzB. The cytochrome P450 monooxygenase FrzC then performs coupling between N10 and C1' to morph the piperazine into a 1,4-diazabicyclo[3.2.1]octane spiro-fused to a 2,5-cyclohexadienone. The dienone portion is further reduced to cyclohexanone by the flavin-dependent reductase FrzD. The methyltranserases (MTs) FrzE and FrzF are then involved in the methylation at the C10' amine and the C4 phenolic oxygen, respectively. The order of the two MTs appear to be interchangeable. Cleavage of the C9-N10' bond by the dioxygenase FrzG then leads to formation of a conjugated iminium. In addition to the oxidation of C9, an additional dehydrogenation between C7 and C8 can occur to give a likely shunt product. The next biosynthetic step is the intramolecular aldol condensation catalyzed by the newly identified aldolase FrzH to yield an aza-tricyclic product with the formation of a C9-C3' bond. The short-chain dehydrogenase/reductase FrzI then produces dephospho-(-)-FR901483 that is phosphorylated at C4'-OH into (-)-FR901483 by the phosphotransferase FrzJ. The sequence is that of Cytochrome P450 monooxygenase FrzC from Cladobotryum sp.